The chain runs to 367 residues: Beta sliding clamp (367 aa).

It belongs to the beta sliding clamp family. Forms a ring-shaped head-to-tail homodimer around DNA which binds and tethers DNA polymerases and other proteins to the DNA. The DNA replisome complex has a single clamp-loading complex (3 tau and 1 each of delta, delta', psi and chi subunits) which binds 3 Pol III cores (1 core on the leading strand and 2 on the lagging strand) each with a beta sliding clamp dimer. Additional proteins in the replisome are other copies of gamma, psi and chi, Ssb, DNA helicase and RNA primase.

The protein resides in the cytoplasm. Functionally, confers DNA tethering and processivity to DNA polymerases and other proteins. Acts as a clamp, forming a ring around DNA (a reaction catalyzed by the clamp-loading complex) which diffuses in an ATP-independent manner freely and bidirectionally along dsDNA. Initially characterized for its ability to contact the catalytic subunit of DNA polymerase III (Pol III), a complex, multichain enzyme responsible for most of the replicative synthesis in bacteria; Pol III exhibits 3'-5' exonuclease proofreading activity. The beta chain is required for initiation of replication as well as for processivity of DNA replication. The polypeptide is Beta sliding clamp (dnaN) (Proteus mirabilis).